A 183-amino-acid polypeptide reads, in one-letter code: ESX-1 secretion-associated protein EspH (183 aa).

Residues 1–16 are compositionally biased toward acidic residues; sequence MVDPPGNDDDHGDLDA. The disordered stretch occupies residues 1–32; the sequence is MVDPPGNDDDHGDLDALDFSAAHTNEASPLDA.

This is ESX-1 secretion-associated protein EspH from Mycobacterium tuberculosis (strain ATCC 25618 / H37Rv).